The chain runs to 196 residues: HTH-type transcriptional regulator UidR (196 aa).

An HTH tetR-type domain is found at 10-70 (QPTRTRILNA…AIILQDQERA (61 aa)). A DNA-binding region (H-T-H motif) is located at residues 33–52 (SMKAICKSCAISPGTLYHHF).

In terms of biological role, repressor for the uidRABC (gusRABC) operon. The protein is HTH-type transcriptional regulator UidR (uidR) of Escherichia coli O157:H7.